The sequence spans 1043 residues: tRNA wybutosine-synthesizing protein 2/3/4 (1043 aa).

A tRNA wybutosine-synthesizing protein 3 homolog region spans residues 1–233; sequence MEFDRRKAAA…PVLQNGAKHG (233 aa). The tract at residues 53–75 is disordered; sequence RVSVLAQPPPPQQADPGGAKTKK. 4 Kelch repeats span residues 360-410, 412-460, 461-510, and 512-559; these read DIYV…AVDR, VYVF…SYGS, KLFL…IYKD, and LGIL…VIID. Positions 700–1041 are tRNA wybutosine-synthesizing protein 2 homolog; that stretch reads QPDDSCVFEE…RHLVVDVKCR (342 aa). Residues Lys-874 and 942–943 each bind S-adenosyl-L-methionine; that span reads DN.

This sequence in the C-terminal section; belongs to the class I-like SAM-binding methyltransferase superfamily. TRM5/TYW2 family. In the N-terminal section; belongs to the TYW3 family.

The catalysed reaction is 4-demethyl-7-[(3S)-3-amino-3-carboxypropyl]wyosine(37) in tRNA(Phe) + S-adenosyl-L-methionine = 7-[(3S)-3-amino-3-carboxypropyl]wyosine(37) in tRNA(Phe) + S-adenosyl-L-homocysteine + H(+). The enzyme catalyses 4-demethylwyosine(37) in tRNA(Phe) + S-adenosyl-L-methionine = 4-demethyl-7-[(3S)-3-amino-3-carboxypropyl]wyosine(37) in tRNA(Phe) + S-methyl-5'-thioadenosine + H(+). It participates in tRNA modification; wybutosine-tRNA(Phe) biosynthesis. Functionally, S-adenosyl-L-methionine-dependent transferase that acts as a component of the wybutosine biosynthesis pathway. Wybutosine is a hyper modified guanosine with a tricyclic base found at the 3'-position adjacent to the anticodon of eukaryotic phenylalanine tRNA. This Oryza sativa subsp. japonica (Rice) protein is tRNA wybutosine-synthesizing protein 2/3/4.